The chain runs to 228 residues: ATP phosphoribosyltransferase (228 aa).

This sequence belongs to the ATP phosphoribosyltransferase family. Short subfamily. As to quaternary structure, heteromultimer composed of HisG and HisZ subunits.

The protein resides in the cytoplasm. The catalysed reaction is 1-(5-phospho-beta-D-ribosyl)-ATP + diphosphate = 5-phospho-alpha-D-ribose 1-diphosphate + ATP. Its pathway is amino-acid biosynthesis; L-histidine biosynthesis; L-histidine from 5-phospho-alpha-D-ribose 1-diphosphate: step 1/9. Functionally, catalyzes the condensation of ATP and 5-phosphoribose 1-diphosphate to form N'-(5'-phosphoribosyl)-ATP (PR-ATP). Has a crucial role in the pathway because the rate of histidine biosynthesis seems to be controlled primarily by regulation of HisG enzymatic activity. The protein is ATP phosphoribosyltransferase of Acinetobacter baylyi (strain ATCC 33305 / BD413 / ADP1).